The chain runs to 74 residues: Putative membrane protein insertion efficiency factor (74 aa).

It belongs to the UPF0161 family.

Its subcellular location is the cell inner membrane. Could be involved in insertion of integral membrane proteins into the membrane. This chain is Putative membrane protein insertion efficiency factor, found in Leptospira interrogans serogroup Icterohaemorrhagiae serovar copenhageni (strain Fiocruz L1-130).